We begin with the raw amino-acid sequence, 565 residues long: Sensor histidine kinase YpdA (565 aa).

Over 1-3 (MHE) the chain is Cytoplasmic. Residues 4 to 24 (IFNMLLAVFDRAALMLICLFF) traverse the membrane as a helical segment. Over 25 to 45 (LIRIRLFRELLHKSAHSPKEL) the chain is Periplasmic. A helical membrane pass occupies residues 46 to 66 (LAVTAIFSLFALFSTWSGVPV). Residues 67–74 (EGSLVNVR) lie on the Cytoplasmic side of the membrane. The helical transmembrane segment at 75–95 (IIAVMSGGILFGPWVGIITGV) threads the bilayer. Residues 96-107 (IAGIHRYLIDIG) lie on the Periplasmic side of the membrane. Residues 108–128 (GVTAIPCFITSILAGCISGWI) traverse the membrane as a helical segment. Topologically, residues 129-139 (NLKIPKAQRWR) are cytoplasmic. A helical membrane pass occupies residues 140–160 (VGILGGMLCETLTMILVIVWA). Topologically, residues 161-172 (PTTALGIDIVSK) are periplasmic. A helical transmembrane segment spans residues 173–193 (IGIPMILGSVCIGFIVLLVQS). Over 194-565 (VEGEKEASAA…PVASQATLLL (372 aa)) the chain is Cytoplasmic. Residues 223–342 (VNSESLRKVC…AVGLSQIIST (120 aa)) form the GAF domain. A Histidine kinase domain is found at 343-554 (QLEVSRAEQL…EIAFYIPNQR (212 aa)). Histidine 371 carries the phosphohistidine; by autocatalysis modification.

In terms of assembly, interacts with BtsT and YhjX. In terms of processing, autophosphorylated.

It localises to the cell inner membrane. The enzyme catalyses ATP + protein L-histidine = ADP + protein N-phospho-L-histidine.. Member of the two-component regulatory system YpdA/YpdB, which is part of a nutrient-sensing regulatory network composed of YpdA/YpdB, the high-affinity pyruvate signaling system BtsS/BtsR and their respective target proteins, YhjX and BtsT. YpdA activates YpdB by phosphorylation in response to high concentrations of extracellular pyruvate. Activation of the YpdA/YpdB signaling cascade also promotes BtsS/BtsR-mediated btsT expression. The polypeptide is Sensor histidine kinase YpdA (ypdA) (Escherichia coli (strain K12)).